A 490-amino-acid chain; its full sequence is 3-octaprenyl-4-hydroxybenzoate carboxy-lyase (490 aa).

Asparagine 172 lines the Mn(2+) pocket. Prenylated FMN is bound by residues isoleucine 175–arginine 177, arginine 189–leucine 191, and arginine 194–glycine 195. Glutamate 238 lines the Mn(2+) pocket. Aspartate 287 serves as the catalytic Proton donor.

Belongs to the UbiD family. In terms of assembly, homohexamer. Prenylated FMN serves as cofactor. The cofactor is Mn(2+).

Its subcellular location is the cell membrane. It catalyses the reaction a 4-hydroxy-3-(all-trans-polyprenyl)benzoate + H(+) = a 2-(all-trans-polyprenyl)phenol + CO2. Its pathway is cofactor biosynthesis; ubiquinone biosynthesis. Functionally, catalyzes the decarboxylation of 3-octaprenyl-4-hydroxy benzoate to 2-octaprenylphenol, an intermediate step in ubiquinone biosynthesis. The polypeptide is 3-octaprenyl-4-hydroxybenzoate carboxy-lyase (Idiomarina loihiensis (strain ATCC BAA-735 / DSM 15497 / L2-TR)).